A 300-amino-acid chain; its full sequence is Epimerase family protein SAV0769 (300 aa).

Belongs to the NAD(P)-dependent epimerase/dehydratase family. SDR39U1 subfamily.

This chain is Epimerase family protein SAV0769, found in Staphylococcus aureus (strain Mu50 / ATCC 700699).